The sequence spans 148 residues: Transcriptional repressor NrdR (148 aa).

Residues 3 to 34 fold into a zinc finger; the sequence is CPFCHNEDTQVLDTRVSDEGDTIRRRRRCAKC. Residues 49–139 enclose the ATP-cone domain; that stretch reads PAIVKKNGSR…VYRSFADIES (91 aa).

The protein belongs to the NrdR family. The cofactor is Zn(2+).

In terms of biological role, negatively regulates transcription of bacterial ribonucleotide reductase nrd genes and operons by binding to NrdR-boxes. The polypeptide is Transcriptional repressor NrdR (Polynucleobacter necessarius subsp. necessarius (strain STIR1)).